Here is a 560-residue protein sequence, read N- to C-terminus: MDIKRTILIVALAIVSYVMVLKWNQDYGQAALPTQNVASSTTTSGLPDTATGNNAAASDDIPRAASDTSAPAETPVAASKDLIQIKTDVLDLSIDPQGGDVAQLTLPLYPRRQDRPDVPFQLFDNGGERTYLAQSGLIGTNGPDANPAGRPIYSSEKKTYQLADGQDKLVVDLKFSKDGVNYIKRFTLKRGLYDVTVTYLIDNQSAQPWSGSMFAQLKRDASADPSSTTATGTATYLGAALWTSSEPYKKVSMKDMDKAQLKETVTGGWVAWLQHYFVTAWVAPKGENNIVQTRKDSKGNYIIGYTGPSLTAAPGAKVETSAVLYAGPKSQAVLKELSPGLELTVDYGILWFIAQPIFWLLQHIHSIVGNWGWSIIFLTMLIKGIFFPLSAASYKSMARMRAVAPKLAALKEQHGDDRQKMSQAMMELYKKEKINPLGGCLPILVQMPVFLSLYWVLLESVEMRQAPFMLWITDLSIKDPFFILPIIMGATMFIQQRLNPTPPDPMQAKVMKMMPIIFTFFFLWFPAGLVLYWVVNNCLSIAQQWYITRKIEAATKKAEA.

Residues 7–27 (ILIVALAIVSYVMVLKWNQDY) form a helical membrane-spanning segment. Residues 38–56 (ASSTTTSGLPDTATGNNAA) show a composition bias toward polar residues. The interval 38 to 76 (ASSTTTSGLPDTATGNNAAASDDIPRAASDTSAPAETPV) is disordered. 4 consecutive transmembrane segments (helical) span residues 367–387 (IVGNWGWSIIFLTMLIKGIFF), 437–457 (LGGCLPILVQMPVFLSLYWVL), 468–488 (FMLWITDLSIKDPFFILPIIM), and 515–535 (PIIFTFFFLWFPAGLVLYWVV).

It belongs to the OXA1/ALB3/YidC family. Type 1 subfamily. In terms of assembly, interacts with the Sec translocase complex via SecD. Specifically interacts with transmembrane segments of nascent integral membrane proteins during membrane integration.

The protein localises to the cell inner membrane. Its function is as follows. Required for the insertion and/or proper folding and/or complex formation of integral membrane proteins into the membrane. Involved in integration of membrane proteins that insert both dependently and independently of the Sec translocase complex, as well as at least some lipoproteins. Aids folding of multispanning membrane proteins. The protein is Membrane protein insertase YidC of Pseudomonas fluorescens (strain Pf0-1).